Consider the following 258-residue polypeptide: MSTTRSSLSIDLNADLGETTGGNPVSDDAAMVAIVSSANVACGFHAGDAHAISNTLAAAAENNVTVGAHVGYNDQAGFGRRFIDYSPAELADEVLYQIGALDALAKARGTQVRYVKPHGAMYNTIVHHEAQAKAVIEGIKAFGADLPVMLLPGAVAADYAEKAGLRVINEVFADRAYNPDGTLVSRRENGAVLHDPEVVARRVVRMAEEGTIEAIDGSTIRTTADSVCVHGDSPGAVAMAERIAAELQSNNITIGSFL.

This sequence belongs to the LamB/PxpA family. As to quaternary structure, forms a complex composed of PxpA, PxpB and PxpC.

It catalyses the reaction 5-oxo-L-proline + ATP + 2 H2O = L-glutamate + ADP + phosphate + H(+). Catalyzes the cleavage of 5-oxoproline to form L-glutamate coupled to the hydrolysis of ATP to ADP and inorganic phosphate. This Corynebacterium jeikeium (strain K411) protein is 5-oxoprolinase subunit A.